The sequence spans 195 residues: RSFPLETRLSNPQIKKLIEGGLSAPQTVTPITDPLSEAELECLLSIPLARSRPSVAVYLSGPWLQPSQNQALMLVDTGAENTVLPQNWLVRDYPRIPAAVLGAGGVSRNRYNWLQGPLTLALKPEGPFITIPKILVDTFDKWQILGRDVLSRLQASISIPEEVRPPMVGVLDAPPSHIGLEHLPVPPEVPQFPLN.

Residues 71–149 enclose the Peptidase A2 domain; the sequence is ALMLVDTGAE…DKWQILGRDV (79 aa). Aspartate 76 is an active-site residue.

The protein is Protease of Bos taurus (Bovine).